A 708-amino-acid chain; its full sequence is Quinohemoprotein alcohol dehydrogenase (708 aa).

An N-terminal signal peptide occupies residues 1–31 (MERLIDNSHGWPGRMVWLLAACLGSAAAFAQ). Glu101 serves as a coordination point for pyrroloquinoline quinone. Residues Cys147 and Cys148 are joined by a disulfide bond. Residues Arg153, Thr198, and 214–215 (GA) contribute to the pyrroloquinoline quinone site. Glu216 is a binding site for Ca(2+). A pyrroloquinoline quinone-binding site is contributed by Thr274. The Ca(2+) site is built by Asn294 and Asp339. Asp339 acts as the Proton acceptor in catalysis. Pyrroloquinoline quinone is bound by residues Lys366, 425-426 (NW), and Val575. Residues 619–708 (YDPAKVEAGT…GTADAIRPKP (90 aa)) enclose the Cytochrome c domain. 4 residues coordinate heme c: Cys635, Cys638, His639, and Met678.

The protein belongs to the bacterial PQQ dehydrogenase family. Monomer. Requires pyrroloquinoline quinone as cofactor. Ca(2+) serves as cofactor. The cofactor is heme c. In terms of processing, in the crystallographic structures Trp-543 is oxidized to 2'-hydroxytryptophan.

It is found in the periplasm. The catalysed reaction is 2 oxidized [azurin] + a primary alcohol = 2 reduced [azurin] + an aldehyde + 2 H(+). In terms of biological role, catalyzes the dye-linked oxidation of primary alcohols to the corresponding aldehydes and the (subsequent) oxidation of the aldehydes to carboxylic acids. Methanol is not a substrate. This Comamonas testosteroni (Pseudomonas testosteroni) protein is Quinohemoprotein alcohol dehydrogenase.